The sequence spans 479 residues: Adenylate kinase 8 (479 aa).

Adenylate kinase regions lie at residues 58–258 (PRIV…TYVQ) and 269–471 (PRVL…SGII). Position 67–72 (67–72 (ASGKTT)) interacts with ATP. Residues 87–113 (TLENLILNEFSYTATEARRLYLQRKTV) form an NMP 1 region. AMP-binding positions include 140 to 143 (GIPE), Q147, and R203. Positions 177 to 206 (GKRIDPQTGEIYHTTFDWPPESEIQNRLMV) are LID 1. Position 278–283 (278–283 (GSGKSL)) interacts with ATP. The tract at residues 298–327 (CCGQLLKEAVADRTTFGELIQPFFEKEMAV) is NMP 2. Residues 325-327 (MAV), 354-357 (GVPR), and Q361 contribute to the AMP site. An LID 2 region spans residues 391-424 (LRRIDPVTGERYHLMYKPPPTMEIQARLLQNPKD). Position 392 (R392) interacts with ATP.

The protein belongs to the adenylate kinase family. As to quaternary structure, interacts with CFAP45 and CFAP52; CFAP45 and AK8 dimerization may create a cavity at the interface of the dimer that can accommodate AMP. Expressed in respiratory cells (at protein level).

It is found in the cytoplasm. Its subcellular location is the cytosol. The protein localises to the cytoskeleton. The protein resides in the cilium axoneme. The catalysed reaction is AMP + ATP = 2 ADP. It catalyses the reaction a 2'-deoxyribonucleoside 5'-diphosphate + ATP = a 2'-deoxyribonucleoside 5'-triphosphate + ADP. The enzyme catalyses a ribonucleoside 5'-diphosphate + ATP = a ribonucleoside 5'-triphosphate + ADP. Its function is as follows. Nucleoside monophosphate (NMP) kinase that catalyzes the reversible transfer of the terminal phosphate group between nucleoside triphosphates and monophosphates. Has highest activity toward AMP, and weaker activity toward dAMP, CMP and dCMP. Also displays broad nucleoside diphosphate kinase activity. The protein is Adenylate kinase 8 (AK8) of Homo sapiens (Human).